Reading from the N-terminus, the 484-residue chain is Probable cytochrome P450 555A1 (484 aa).

Residues 1 to 21 form a helical membrane-spanning segment; the sequence is MIIIVIVVFLFYFSFLNLNLN. C432 contributes to the heme binding site.

The protein belongs to the cytochrome P450 family. Heme is required as a cofactor.

Its subcellular location is the membrane. The protein is Probable cytochrome P450 555A1 (cyp555A1) of Dictyostelium discoideum (Social amoeba).